A 732-amino-acid chain; its full sequence is DNA gyrase subunit B, mitochondrial (732 aa).

Positions 513–620 (SEIFIVEGDS…RYQRALFDAG (108 aa)) constitute a Toprim domain. Mg(2+) contacts are provided by glutamate 519, aspartate 593, and aspartate 595.

The protein belongs to the type II topoisomerase GyrB family. Made up of two chains. The A chain is responsible for DNA breakage and rejoining; the B chain catalyzes ATP hydrolysis. Requires Mg(2+) as cofactor. The cofactor is Mn(2+). Ca(2+) serves as cofactor.

It is found in the mitochondrion. The enzyme catalyses ATP-dependent breakage, passage and rejoining of double-stranded DNA.. In terms of biological role, a type II topoisomerase that negatively supercoils closed circular double-stranded DNA in an ATP-dependent manner. The protein is DNA gyrase subunit B, mitochondrial (GYRBM) of Arabidopsis thaliana (Mouse-ear cress).